A 483-amino-acid polypeptide reads, in one-letter code: Glutamyl-tRNA(Gln) amidotransferase subunit A (483 aa).

Active-site charge relay system residues include Lys-75 and Ser-150. Ser-174 functions as the Acyl-ester intermediate in the catalytic mechanism.

This sequence belongs to the amidase family. GatA subfamily. In terms of assembly, heterotrimer of A, B and C subunits.

The catalysed reaction is L-glutamyl-tRNA(Gln) + L-glutamine + ATP + H2O = L-glutaminyl-tRNA(Gln) + L-glutamate + ADP + phosphate + H(+). Allows the formation of correctly charged Gln-tRNA(Gln) through the transamidation of misacylated Glu-tRNA(Gln) in organisms which lack glutaminyl-tRNA synthetase. The reaction takes place in the presence of glutamine and ATP through an activated gamma-phospho-Glu-tRNA(Gln). This chain is Glutamyl-tRNA(Gln) amidotransferase subunit A, found in Legionella pneumophila (strain Corby).